The sequence spans 995 residues: S1 RNA-binding domain-containing protein 1 (995 aa).

The tract at residues 23–81 (SFSELSSASEEDDKEDSAWEPQKKVPRSRKQPPPKESKPKRMPRVKKNAPQISDGSEVV) is disordered. Glycyl lysine isopeptide (Lys-Gly) (interchain with G-Cter in SUMO2) cross-links involve residues K84 and K134. The tract at residues 120 to 165 (CAAQPHTVRRTKKLKVEEETSKASNLEGESNSSETPSTSTVWGGTC) is disordered. Low complexity predominate over residues 146–159 (EGESNSSETPSTST). Glycyl lysine isopeptide (Lys-Gly) (interchain with G-Cter in SUMO2) cross-links involve residues K166, K167, and K183. K185 participates in a covalent cross-link: Glycyl lysine isopeptide (Lys-Gly) (interchain with G-Cter in SUMO1); alternate. K185 participates in a covalent cross-link: Glycyl lysine isopeptide (Lys-Gly) (interchain with G-Cter in SUMO2); alternate. Positions 258–288 (ADSLREVQQTLEELRAVAKKVHSTIQKIKKE) form a coiled coil. A Phosphoserine modification is found at S861. The region spanning 919 to 992 (GTVLTGKVEN…PRSRITLDLI (74 aa)) is the S1 motif domain. K955 participates in a covalent cross-link: Glycyl lysine isopeptide (Lys-Gly) (interchain with G-Cter in SUMO2). S964 carries the phosphoserine modification.

The protein is S1 RNA-binding domain-containing protein 1 (SRBD1) of Homo sapiens (Human).